Reading from the N-terminus, the 60-residue chain is Large ribosomal subunit protein bL32 (60 aa).

Belongs to the bacterial ribosomal protein bL32 family.

The chain is Large ribosomal subunit protein bL32 from Streptococcus gordonii (strain Challis / ATCC 35105 / BCRC 15272 / CH1 / DL1 / V288).